The sequence spans 233 residues: Orotate phosphoribosyltransferase (233 aa).

Lys29 contacts 5-phospho-alpha-D-ribose 1-diphosphate. Phe37 to Phe38 provides a ligand contact to orotate. Residues Tyr79 to Lys80, Arg109, Lys110, Lys113, His115, and Asp135 to Ala143 contribute to the 5-phospho-alpha-D-ribose 1-diphosphate site. The orotate site is built by Thr139 and Arg167.

Belongs to the purine/pyrimidine phosphoribosyltransferase family. PyrE subfamily. In terms of assembly, homodimer.

It carries out the reaction orotidine 5'-phosphate + diphosphate = orotate + 5-phospho-alpha-D-ribose 1-diphosphate. The protein operates within pyrimidine metabolism; UMP biosynthesis via de novo pathway; UMP from orotate: step 1/2. In terms of biological role, catalyzes the transfer of a ribosyl phosphate group from 5-phosphoribose 1-diphosphate to orotate, leading to the formation of orotidine monophosphate (OMP). The polypeptide is Orotate phosphoribosyltransferase (ura-5) (Neurospora crassa (strain ATCC 24698 / 74-OR23-1A / CBS 708.71 / DSM 1257 / FGSC 987)).